A 413-amino-acid chain; its full sequence is Alpha-1-antitrypsin 1-5 (413 aa).

An N-terminal signal peptide occupies residues 1-24; that stretch reads MTPSISWCLLLLAGLCCLVPSFLA. N-linked (GlcNAc...) asparagine glycans are attached at residues asparagine 64, asparagine 101, and asparagine 265. The tract at residues 368 to 387 is RCL; sequence AATVLQGGFLSMPPILHFNR.

Belongs to the serpin family.

The protein resides in the secreted. Does not inhibit elastase or chymotrypsin. No target protease has been identified to date. The polypeptide is Alpha-1-antitrypsin 1-5 (Serpina1e) (Mus musculus (Mouse)).